The following is a 439-amino-acid chain: Serine--tRNA ligase (439 aa).

242 to 244 (TAE) is an L-serine binding site. Position 273 to 275 (273 to 275 (RQE)) interacts with ATP. Glutamate 296 serves as a coordination point for L-serine. ATP is bound at residue 360-363 (EISS). Residue serine 396 coordinates L-serine.

The protein belongs to the class-II aminoacyl-tRNA synthetase family. Type-1 seryl-tRNA synthetase subfamily. As to quaternary structure, homodimer. The tRNA molecule binds across the dimer.

It localises to the cytoplasm. It catalyses the reaction tRNA(Ser) + L-serine + ATP = L-seryl-tRNA(Ser) + AMP + diphosphate + H(+). The catalysed reaction is tRNA(Sec) + L-serine + ATP = L-seryl-tRNA(Sec) + AMP + diphosphate + H(+). Its pathway is aminoacyl-tRNA biosynthesis; selenocysteinyl-tRNA(Sec) biosynthesis; L-seryl-tRNA(Sec) from L-serine and tRNA(Sec): step 1/1. Functionally, catalyzes the attachment of serine to tRNA(Ser). Is also able to aminoacylate tRNA(Sec) with serine, to form the misacylated tRNA L-seryl-tRNA(Sec), which will be further converted into selenocysteinyl-tRNA(Sec). The chain is Serine--tRNA ligase from Oenococcus oeni (strain ATCC BAA-331 / PSU-1).